A 178-amino-acid chain; its full sequence is MILSDKTILKMLAEKTLIIEPLEKEQIQPASVDIRLGNTFSIVEDSCTGIINLEKEVKYKTITSDTYILLPNQFVLATTMEYFELPNNLTAFVEGRSSLGRLGLFIQNAGWVDPGFKGEITLELFNANRCAIELKAGRRVGQLVFAKMDDTALNPYKGKYQGQKGATGSRVFLDYEVK.

DCTP is bound by residues 96 to 101 (RSSLGR), aspartate 113, 121 to 123 (TLE), glutamine 142, tyrosine 156, and glutamine 163. Glutamate 123 acts as the Proton donor/acceptor in catalysis.

Belongs to the dCTP deaminase family. Homotrimer.

It carries out the reaction dCTP + 2 H2O = dUMP + NH4(+) + diphosphate. It participates in pyrimidine metabolism; dUMP biosynthesis; dUMP from dCTP: step 1/1. Bifunctional enzyme that catalyzes both the deamination of dCTP to dUTP and the hydrolysis of dUTP to dUMP without releasing the toxic dUTP intermediate. This Acetivibrio thermocellus (strain ATCC 27405 / DSM 1237 / JCM 9322 / NBRC 103400 / NCIMB 10682 / NRRL B-4536 / VPI 7372) (Clostridium thermocellum) protein is dCTP deaminase, dUMP-forming.